Reading from the N-terminus, the 931-residue chain is Protein translocase subunit SecA (931 aa).

ATP is bound by residues Gln87, 105 to 109 (GEGKT), and Asp515. Residues Cys915, Cys917, Cys926, and His927 each contribute to the Zn(2+) site.

It belongs to the SecA family. As to quaternary structure, monomer and homodimer. Part of the essential Sec protein translocation apparatus which comprises SecA, SecYEG and auxiliary proteins SecDF-YajC and YidC. It depends on Zn(2+) as a cofactor.

It is found in the cell inner membrane. The protein localises to the cytoplasm. The catalysed reaction is ATP + H2O + cellular proteinSide 1 = ADP + phosphate + cellular proteinSide 2.. In terms of biological role, part of the Sec protein translocase complex. Interacts with the SecYEG preprotein conducting channel. Has a central role in coupling the hydrolysis of ATP to the transfer of proteins into and across the cell membrane, serving both as a receptor for the preprotein-SecB complex and as an ATP-driven molecular motor driving the stepwise translocation of polypeptide chains across the membrane. This Burkholderia ambifaria (strain MC40-6) protein is Protein translocase subunit SecA.